An 897-amino-acid chain; its full sequence is Molybdenum import ATP-binding protein ModC 2 (897 aa).

An ABC transporter domain is found at 6 to 236; the sequence is RGRIDAAFRG…PALPLAYSRD (231 aa). 38–45 provides a ligand contact to ATP; that stretch reads GPSGCGKT. The Mop domain maps to 295–365; that stretch reads ESSILNILPA…VKGVSLVRAS (71 aa). Residues 823–848 are disordered; the sequence is LGDRSVLGPREPDAGAKGRKRQNDPE. Positions 832-848 are enriched in basic and acidic residues; it reads REPDAGAKGRKRQNDPE.

The protein belongs to the ABC transporter superfamily. Molybdate importer (TC 3.A.1.8) family. As to quaternary structure, the complex is composed of two ATP-binding proteins (ModC), two transmembrane proteins (ModB) and a solute-binding protein (ModA).

Its subcellular location is the cell inner membrane. It catalyses the reaction molybdate(out) + ATP + H2O = molybdate(in) + ADP + phosphate + H(+). Its function is as follows. Part of the ABC transporter complex ModABC involved in molybdenum import. Responsible for energy coupling to the transport system. This chain is Molybdenum import ATP-binding protein ModC 2, found in Bradyrhizobium diazoefficiens (strain JCM 10833 / BCRC 13528 / IAM 13628 / NBRC 14792 / USDA 110).